Consider the following 301-residue polypeptide: UDP-N-acetylenolpyruvoylglucosamine reductase (301 aa).

The FAD-binding PCMH-type domain occupies 30 to 194; it reads VGGEADYLVF…LSVKFALAPG (165 aa). Arg173 is a catalytic residue. Residue Ser223 is the Proton donor of the active site. Residue Glu293 is part of the active site.

Belongs to the MurB family. It depends on FAD as a cofactor.

It is found in the cytoplasm. The enzyme catalyses UDP-N-acetyl-alpha-D-muramate + NADP(+) = UDP-N-acetyl-3-O-(1-carboxyvinyl)-alpha-D-glucosamine + NADPH + H(+). The protein operates within cell wall biogenesis; peptidoglycan biosynthesis. In terms of biological role, cell wall formation. The polypeptide is UDP-N-acetylenolpyruvoylglucosamine reductase (Streptococcus pneumoniae (strain Hungary19A-6)).